A 577-amino-acid chain; its full sequence is Methionine--tRNA ligase, mitochondrial (577 aa).

The 'HIGH' region signature appears at 25 to 37 (PIFYVNAAPHIGH). The 'KMSKS' region signature appears at 329 to 333 (KMSKS). An ATP-binding site is contributed by lysine 332.

Belongs to the class-I aminoacyl-tRNA synthetase family.

The protein localises to the mitochondrion matrix. The enzyme catalyses tRNA(Met) + L-methionine + ATP = L-methionyl-tRNA(Met) + AMP + diphosphate. This is Methionine--tRNA ligase, mitochondrial (MSM1) from Candida albicans (Yeast).